The following is a 2196-amino-acid chain: MGAQVSTQKTGAHETLLEAAHGATINYTNINYYKDAASNSANRQDFSQDPGKFTEPVKDLMIKSMPALNSPSAEECGFSDRVRSLTLGNSTITTQESANVVVGYGRWPDYLADDQATAEDQPTQPDVATCRFYTLESVSWQSGSAGWWWKFPEALKDMGLFGQNMYYHYLGRAGYTIHVQCNASKFHQGCLLVVCVPEAEMGCADVTSVVTALNLINGEDAHTFSPSEATAEAGKVQTAVCNAGMGVAVGNLTIFPHQWINLRTNNCATIVMPYINSVPMDNMFRHYNFTLMVIPFAPLASQGGSTYVPITITIAPMCAEYNGLRLSTQPQGLPVMNTPGSNQFLTSDDFQSPCAMPEFDVTPPMDIPGEVRNIMEIAEVDSVVPVNNMSSKVKTIEAYQIPVSVGTTVRGDAIFSFQLNPGNSPVLNRTLLGEIINYYAHWSGSIKLTFLFCGSAMATGKLLLAYSPPGASVPTSRKDAMLGTHIIWDLGLQSSCVLCVPWISQTHYRMVQQDEYSAAGYITCWYQTNIIVPPDTPTDCIVLCFVSACNDFSVRMLKDTPFVEQEADLQGDSEHAVESAVSRVADTIMSGPSNSQQVPALTAVETGHTSQVVPSDTIQTRHVQNFHSRSESTIENFLSRSACVHIANYNAKGDKTDVNRFDRWEINIREMVQLRRKCEMFTYLRFDIEVTFVITSKQDQGPKLNQDMPVLTHQIMYVPPGGSVPSTVESYAWQTSTNPSVFWTEGNAPARMSIPFISIGNAYSSFYDGWSHFTQKGVYGYNTLNKMGQLFVRHVNKETPTPVTSTIRVYFKPKHIRAWVPRPPRLCPYVNKTNVNFITTQVTEPRNDLNDVPKSEHNMHTYGAFGQQSGAVYVGNYRVVNRHLATHNDWQNCVWEDYNRDLLVSTTTAQGCDTIARCHCTTGVYFCSSRNRHYPVSFEGPGLVEVQESEYYPKRYQSHVLLAAGFSEPGDCGGILRCEHGVIGIVTMGGEGVVGFADVRDLLWLEDDAMEQGVKDYVEQLGNAFGSGFTNQICEQVNLLKESLVGQDSILEKSLKALVKIISALVIVVRNHDDLITVTATLALIGCTSSPWRWLKQKVSQYYGIPMAERQNNGWLKKFTEMTNACKGMEWIAIKIQKFIEWLKVKILPEVKEKHEFLNRLKQLPLLESQIATIEQSAPSQSDQEQLFSNVQYFAHYCRKYAPLYAAEAKRVFSLEKKMSNYIQFKSKCRIEPVCLLLHGSPGAGKSVATNLIGRSLAEKLNSSVYSLPPDPDHFDGYKQQAVVIMDDLCQNPDGKDVSLFCQMVSSVDFVPPMAALEEKGILFTSPFVLASTNAGSINAPTVSDSRALARRFHFDMNIEVISMYSQNGKINMPMSVKTCDEECCPVNFKKCCPLVCGKAIQFIDRRTQVRYSLDMLVTEMFREYNHRHSVGATLEALFQGPPLYREIKISVAPETPPPPAIADLLKSVDSEAVREYCKEKGWLVPEINSTLQIEKHVSRAFICLQALTTFVSVAGIIYIIYKLFAGFQGAYTGMPNQKPKVPTLRQAKVQGPAFEFAVAMMKRNSSTVKTEYGEFTMLGIYDRWAVLPRHAKPGPTILMNDQEVGVLDAKELVDKDGTNLELTLLKLNRNEKFRDIRGFLAKEEVEVNEAVLAINTSKFPNMYIPVGQVTDYGFLNLGGTPTKRMLMYNFPTRAGQCGGVLMSTGKVLGIHVGGNGHQGFSAALLKHYFNDEQGEIEFIESSKDAGFPIINTPSKTKLEPSVFHQVFEGNKEPAVLRSGDPRLKANFEEAIFSKYIGNVNTHVDEYMMEAVDHYAGQLATLDISTEPMKLEDAVYGTEGLEALDLTTSAGYPYVALGIKKRDILSKRTKDLTKLKECMDKYGLNLPMVTYVKDELRSAEKVAKGKSRLIEASSLNDSVAMRQTFGNLYKTFHLNPGIVTGSAVGCDPDLFWSKIPVMLDGHLIAFDYSGYDASLSPVWFACLKMLLEKLGYTHKETNYIDYLCNSHHLYRDKHYFVRGGMPSGCSGTSIFNSMINNIIIRTLMLKVYKGIDLDQFRMIAYGDDVIASYPWPIDASLLAEAGKDYGLIMTPADKGECFNEVTWTNVTFLKRYFRADEQYPFLVHPVMPMKDIHESIRWTKDPKNTQDHVRSLCLLAWHNGEHEYEEFIRKIRSVPVGRCLTLPAFSTLRRKWLDSF.

The N-myristoyl glycine; by host moiety is linked to residue G2. The Cytoplasmic portion of the chain corresponds to 2–1506; the sequence is GAQVSTQKTG…HVSRAFICLQ (1505 aa). The amphipathic alpha-helix stretch occupies residues 568 to 584; sequence DLQGDSEHAVESAVSRV. Active-site for protease 2A activity residues include H883 and D901. Zn(2+)-binding residues include C918 and C920. C972 (for protease 2A activity) is an active-site residue. 2 residues coordinate Zn(2+): C978 and H980. A membrane-binding region spans residues 1112 to 1184; sequence NNGWLKKFTE…EQSAPSQSDQ (73 aa). An oligomerization region spans residues 1112–1250; it reads NNGWLKKFTE…SPGAGKSVAT (139 aa). Positions 1133-1137 are RNA-binding; that stretch reads AIKIQ. The SF3 helicase domain maps to 1216–1372; sequence EKKMSNYIQF…SMYSQNGKIN (157 aa). C1380, C1392, and C1397 together coordinate Zn(2+). The C4-type; degenerate zinc-finger motif lies at 1380-1397; the sequence is CDEECCPVNFKKCCPLVC. The segment at 1424-1431 is RNA-binding; it reads EYNHRHSV. The oligomerization stretch occupies residues 1435 to 1440; the sequence is LEALFQ. The stretch at 1507–1522 is an intramembrane region; that stretch reads ALTTFVSVAGIIYIIY. The Cytoplasmic portion of the chain corresponds to 1523–2196; that stretch reads KLFAGFQGAY…TLRRKWLDSF (674 aa). An O-(5'-phospho-RNA)-tyrosine modification is found at Y1532. The region spanning 1552–1730 is the Peptidase C3 domain; it reads GPAFEFAVAM…FSAALLKHYF (179 aa). Active-site for protease 3C activity residues include H1591, E1622, and C1698. Residues 1961-2077 form the RdRp catalytic domain; sequence GHLIAFDYSG…SYPWPIDASL (117 aa). Residues D1967 and D2063 each coordinate Mg(2+).

It belongs to the picornaviruses polyprotein family. Interacts with capsid protein VP1 and capsid protein VP3 to form heterotrimeric protomers. In terms of assembly, interacts with capsid protein VP0, and capsid protein VP3 to form heterotrimeric protomers. Five protomers subsequently associate to form pentamers which serve as building blocks for the capsid. Interacts with capsid protein VP2, capsid protein VP3 and capsid protein VP4 following cleavage of capsid protein VP0. As to quaternary structure, interacts with capsid protein VP1 and capsid protein VP3 in the mature capsid. Interacts with capsid protein VP0 and capsid protein VP1 to form heterotrimeric protomers. Five protomers subsequently associate to form pentamers which serve as building blocks for the capsid. Interacts with capsid protein VP4 in the mature capsid. Interacts with protein 2C; this interaction may be important for virion morphogenesis. In terms of assembly, interacts with capsid protein VP1 and capsid protein VP3. As to quaternary structure, homodimer. Homohexamer; forms a hexameric ring structure with 6-fold symmetry characteristic of AAA+ ATPases. Interacts (via N-terminus) with host RTN3 (via reticulon domain); this interaction is important for viral replication. Interacts with capsid protein VP3; this interaction may be important for virion morphogenesis. In terms of assembly, interacts with protein 3CD. As to quaternary structure, homodimer. Interacts with host GBF1. Interacts (via GOLD domain) with host ACBD3 (via GOLD domain); this interaction allows the formation of a viral protein 3A/ACBD3 heterotetramer with a 2:2 stoichiometry, which will stimulate the recruitment of host PI4KB in order to synthesize PI4P at the viral RNA replication sites. Interacts with RNA-directed RNA polymerase. In terms of assembly, interacts with protein 3AB and with RNA-directed RNA polymerase. As to quaternary structure, interacts with Viral protein genome-linked and with protein 3CD. Mg(2+) is required as a cofactor. Specific enzymatic cleavages in vivo by the viral proteases yield processing intermediates and the mature proteins. In terms of processing, myristoylation is required for the formation of pentamers during virus assembly. Further assembly of 12 pentamers and a molecule of genomic RNA generates the provirion. Post-translationally, during virion maturation, immature virions are rendered infectious following cleavage of VP0 into VP4 and VP2. This maturation seems to be an autocatalytic event triggered by the presence of RNA in the capsid and it is followed by a conformational change infectious virion. Myristoylation is required during RNA encapsidation and formation of the mature virus particle. In terms of processing, VPg is uridylylated by the polymerase into VPg-pUpU. This acts as a nucleotide-peptide primer for the genomic RNA replication.

Its subcellular location is the virion. It localises to the host cytoplasm. It is found in the host cytoplasmic vesicle membrane. The protein localises to the host nucleus. The catalysed reaction is a ribonucleoside 5'-triphosphate + H2O = a ribonucleoside 5'-diphosphate + phosphate + H(+). It carries out the reaction Selective cleavage of Tyr-|-Gly bond in the picornavirus polyprotein.. It catalyses the reaction RNA(n) + a ribonucleoside 5'-triphosphate = RNA(n+1) + diphosphate. The enzyme catalyses Selective cleavage of Gln-|-Gly bond in the poliovirus polyprotein. In other picornavirus reactions Glu may be substituted for Gln, and Ser or Thr for Gly.. Replication or transcription is subject to high level of random mutations by the nucleotide analog ribavirin. Forms an icosahedral capsid of pseudo T=3 symmetry with capsid proteins VP2 and VP3. The capsid is 300 Angstroms in diameter, composed of 60 copies of each capsid protein and enclosing the viral positive strand RNA genome. Capsid protein VP1 mainly forms the vertices of the capsid. Capsid protein VP1 interacts with host cell receptor to provide virion attachment to target host cells. This attachment induces virion internalization. Tyrosine kinases are probably involved in the entry process. After binding to its receptor, the capsid undergoes conformational changes. Capsid protein VP1 N-terminus (that contains an amphipathic alpha-helix) and capsid protein VP4 are externalized. Together, they shape a pore in the host membrane through which viral genome is translocated to host cell cytoplasm. Functionally, forms an icosahedral capsid of pseudo T=3 symmetry with capsid proteins VP2 and VP3. The capsid is 300 Angstroms in diameter, composed of 60 copies of each capsid protein and enclosing the viral positive strand RNA genome. Its function is as follows. Lies on the inner surface of the capsid shell. After binding to the host receptor, the capsid undergoes conformational changes. Capsid protein VP4 is released, Capsid protein VP1 N-terminus is externalized, and together, they shape a pore in the host membrane through which the viral genome is translocated into the host cell cytoplasm. In terms of biological role, component of immature procapsids, which is cleaved into capsid proteins VP4 and VP2 after maturation. Allows the capsid to remain inactive before the maturation step. Cysteine protease that cleaves viral polyprotein and specific host proteins. It is responsible for the autocatalytic cleavage between the P1 and P2 regions, which is the first cleavage occurring in the polyprotein. Also cleaves the host translation initiation factor EIF4G1, in order to shut down the capped cellular mRNA translation. Inhibits the host nucleus-cytoplasm protein and RNA trafficking by cleaving host members of the nuclear pores. Counteracts stress granule formation probably by antagonizing its assembly or promoting its dissassembly. Functionally, plays an essential role in the virus replication cycle by acting as a viroporin. Creates a pore in the host endoplasmic reticulum and as a consequence releases Ca2+ in the cytoplasm of infected cell. In turn, high levels of cytoplasmic calcium may trigger membrane trafficking and transport of viral ER-associated proteins to viroplasms, sites of viral genome replication. Its function is as follows. Induces and associates with structural rearrangements of intracellular membranes. Displays RNA-binding, nucleotide binding and NTPase activities. May play a role in virion morphogenesis and viral RNA encapsidation by interacting with the capsid protein VP3. In terms of biological role, localizes the viral replication complex to the surface of membranous vesicles. Together with protein 3CD binds the Cis-Active RNA Element (CRE) which is involved in RNA synthesis initiation. Acts as a cofactor to stimulate the activity of 3D polymerase, maybe through a nucleid acid chaperone activity. Localizes the viral replication complex to the surface of membranous vesicles. It inhibits host cell endoplasmic reticulum-to-Golgi apparatus transport and causes the disassembly of the Golgi complex, possibly through GBF1 interaction. This would result in depletion of MHC, trail receptors and IFN receptors at the host cell surface. Plays an essential role in viral RNA replication by recruiting ACBD3 and PI4KB at the viral replication sites, thereby allowing the formation of the rearranged membranous structures where viral replication takes place. Functionally, acts as a primer for viral RNA replication and remains covalently bound to viral genomic RNA. VPg is uridylylated prior to priming replication into VPg-pUpU. The oriI viral genomic sequence may act as a template for this. The VPg-pUpU is then used as primer on the genomic RNA poly(A) by the RNA-dependent RNA polymerase to replicate the viral genome. During genome replication, the VPg-RNA linkage is removed by the host TDP2, thereby accelerating replication. During the late stage of the replication cycle, host TDP2 is excluded from sites of viral RNA synthesis and encapsidation, allowing for the generation of progeny virions. Its function is as follows. Involved in the viral replication complex and viral polypeptide maturation. It exhibits protease activity with a specificity and catalytic efficiency that is different from protease 3C. Protein 3CD lacks polymerase activity. Protein 3CD binds to the 5'UTR of the viral genome. In terms of biological role, replicates the viral genomic RNA on the surface of intracellular membranes. May form linear arrays of subunits that propagate along a strong head-to-tail interaction called interface-I. Covalently attaches UMP to a tyrosine of VPg, which is used to prime RNA synthesis. The positive stranded RNA genome is first replicated at virus induced membranous vesicles, creating a dsRNA genomic replication form. This dsRNA is then used as template to synthesize positive stranded RNA genomes. ss(+)RNA genomes are either translated, replicated or encapsidated. Major viral protease that mediates proteolytic processing of the polyprotein. Cleaves host EIF5B, contributing to host translation shutoff. Also cleaves host PABPC1, contributing to host translation shutoff. Cleaves host NLRP1, triggers host N-glycine-mediated degradation of the autoinhibitory NLRP1 N-terminal fragment. This chain is Genome polyprotein, found in Homo sapiens (Human).